We begin with the raw amino-acid sequence, 544 residues long: Protein adenylyltransferase (544 aa).

The Fido domain maps to 63 to 216 (FDTAYLCHIH…LEPMQHLFED (154 aa)). ATP contacts are provided by residues 93–94 (FA), 106–107 (RT), 163–167 (EGNGR), and Arg-170.

It is found in the secreted. The catalysed reaction is L-tyrosyl-[protein] + ATP = O-(5'-adenylyl)-L-tyrosyl-[protein] + diphosphate. It catalyses the reaction L-threonyl-[protein] + ATP = 3-O-(5'-adenylyl)-L-threonyl-[protein] + diphosphate. Its function is as follows. Adenylyltransferase involved in virulence by mediating the addition of adenosine 5'-monophosphate (AMP) to specific residue of host target proteins. This is Protein adenylyltransferase (bepA) from Bartonella henselae (strain ATCC 49882 / DSM 28221 / CCUG 30454 / Houston 1) (Rochalimaea henselae).